Here is a 317-residue protein sequence, read N- to C-terminus: Nitrilase (317 aa).

The region spanning 5–280 (VKVAVVQAEP…DGVIISELDM (276 aa)) is the CN hydrolase domain. E45 serves as the catalytic Proton acceptor. Residue K125 is part of the active site. The active-site Nucleophile is C165.

It belongs to the carbon-nitrogen hydrolase superfamily. Nitrilase family.

It carries out the reaction a nitrile + 2 H2O = a carboxylate + NH4(+). Functionally, nitrilase that hydrolyzes preferentially 4-cyanopyridine. Is also able to hydrolyze some aliphatic nitriles, such as phenylacetonitrile. The protein is Nitrilase of Meyerozyma guilliermondii (strain ATCC 6260 / CBS 566 / DSM 6381 / JCM 1539 / NBRC 10279 / NRRL Y-324) (Yeast).